The primary structure comprises 663 residues: Transcriptional repressor CTCFL (663 aa).

The segment covering 24–51 (EKGLKEEEKDGVCREKDHRSPSELEAER) has biased composition (basic and acidic residues). Disordered stretches follow at residues 24–55 (EKGL…TSGA) and 221–250 (NSNV…QRKT). 10 C2H2-type zinc fingers span residues 257–279 (FHCD…MKTH), 285–307 (HLCH…VNTH), 313–336 (YKCN…RYKH), 342–364 (FKCS…VRSH), 370–392 (FQCC…MRTH), 398–421 (YECH…LQKH), 428–451 (YQCP…RNLH), 458–480 (LKCR…QKTH), 486–508 (FKCK…IRTH), and 514–537 (FTCL…RKYH). The C2H2-type 11; atypical zinc-finger motif lies at 546-568 (YKCSKCGKGFSRWINLHRHSEKC). Residues 569–630 (GSGEAKSAAS…STTKGEQFPG (62 aa)) are disordered. Basic residues predominate over residues 580 to 590 (KGRRTRKRKQT). The segment covering 594 to 607 (EATKGQKEAAKGWK) has biased composition (basic and acidic residues). Over residues 608-620 (EAANGDEAAAEEA) the composition is skewed to low complexity.

It belongs to the CTCF zinc-finger protein family. Interacts with histones, PRMT7 and SETD1A. Interacts (via N-terminus) with BAG6/BAT3. In terms of tissue distribution, testis specific. Specifically expressed in primary spermatocytes.

The protein localises to the cytoplasm. It localises to the nucleus. Its function is as follows. Testis-specific DNA binding protein responsible for insulator function, nuclear architecture and transcriptional control, which probably acts by recruiting epigenetic chromatin modifiers. Plays a key role in gene imprinting in male germline, by participating in the establishment of differential methylation at the IGF2/H19 imprinted control region (ICR). Directly binds the unmethylated H19 ICR and recruits the PRMT7 methyltransferase, leading to methylate histone H4 'Arg-3' to form H4R3sme2. This probably leads to recruit de novo DNA methyltransferases at these sites. Seems to act as tumor suppressor. In association with DNMT1 and DNMT3B, involved in activation of BAG1 gene expression by binding to its promoter. Required for dimethylation of H3 lysine 4 (H3K4me2) of MYC and BRCA1 promoters. The polypeptide is Transcriptional repressor CTCFL (CTCFL) (Homo sapiens (Human)).